A 121-amino-acid chain; its full sequence is Large ribosomal subunit protein bL12 (121 aa).

The protein belongs to the bacterial ribosomal protein bL12 family. Homodimer. Part of the ribosomal stalk of the 50S ribosomal subunit. Forms a multimeric L10(L12)X complex, where L10 forms an elongated spine to which 2 to 4 L12 dimers bind in a sequential fashion. Binds GTP-bound translation factors.

Forms part of the ribosomal stalk which helps the ribosome interact with GTP-bound translation factors. Is thus essential for accurate translation. The sequence is that of Large ribosomal subunit protein bL12 from Shewanella baltica (strain OS185).